The chain runs to 76 residues: MLKVAKISVSCIVLVLCIYSLFNQNELLLIVVQLFVAALLSLVGVEAILSKQKLSEYLLFGSAAFLLVVNGVKFII.

3 helical membrane passes run 2-22 (LKVAKISVSCIVLVLCIYSLF), 28-48 (LLIVVQLFVAALLSLVGVEAI), and 56-76 (EYLLFGSAAFLLVVNGVKFII).

The protein localises to the cell membrane. This is an uncharacterized protein from Bacillus subtilis (strain 168).